Consider the following 310-residue polypeptide: Isoflavone reductase homolog P3 (310 aa).

NADP(+) is bound by residues 12–18 (GGTGYIG), Arg-37, and Lys-46. Residue Lys-134 is the Proton acceptor of the active site. NADP(+) is bound at residue Arg-138.

Belongs to the NmrA-type oxidoreductase family. Isoflavone reductase subfamily.

It localises to the cytoplasm. The sequence is that of Isoflavone reductase homolog P3 from Arabidopsis thaliana (Mouse-ear cress).